The following is a 205-amino-acid chain: Small ribosomal subunit protein uS4c (205 aa).

One can recognise an S4 RNA-binding domain in the interval 93–156; sequence MRLDNTVFRL…KSRNLVLNNL (64 aa).

It belongs to the universal ribosomal protein uS4 family. Part of the 30S ribosomal subunit. Contacts protein S5. The interaction surface between S4 and S5 is involved in control of translational fidelity.

It localises to the plastid. The protein resides in the chloroplast. In terms of biological role, one of the primary rRNA binding proteins, it binds directly to 16S rRNA where it nucleates assembly of the body of the 30S subunit. Its function is as follows. With S5 and S12 plays an important role in translational accuracy. The sequence is that of Small ribosomal subunit protein uS4c (rps4) from Mesostigma viride (Green alga).